Here is a 1124-residue protein sequence, read N- to C-terminus: Phytochrome A1 (1124 aa).

The span at 1 to 14 shows a compositional bias: low complexity; that stretch reads MSSSRPSQSSTTSA. Positions 1–20 are disordered; the sequence is MSSSRPSQSSTTSARSKHSA. In terms of domain architecture, GAF spans 218-401; the sequence is SMERLCDTMV…VFAIHVNKEL (184 aa). Residue cysteine 323 coordinates phytochromobilin. In terms of domain architecture, PAS 1 spans 617–687; that stretch reads VTAEMVRLIE…KMLELALQGK (71 aa). A PAC domain is found at 690 to 746; that stretch reads RNVEFEIKTHGPSGDSSPISLIVNACASRDVGDSVVGVCFIAQDITGQKNIMDKFTR. Residues 747 to 821 form the PAS 2 domain; it reads IEGDYRAIIQ…KNQEAFVNFG (75 aa). Residues 901–1118 enclose the Histidine kinase domain; it reads YIRRQIRNPL…TFIISVELAV (218 aa).

This sequence belongs to the phytochrome family. In terms of assembly, homodimer. In terms of processing, contains one covalently linked phytochromobilin chromophore.

Functionally, regulatory photoreceptor which exists in two forms that are reversibly interconvertible by light: the Pr form that absorbs maximally in the red region of the spectrum and the Pfr form that absorbs maximally in the far-red region. Photoconversion of Pr to Pfr induces an array of morphogenic responses, whereas reconversion of Pfr to Pr cancels the induction of those responses. Pfr controls the expression of a number of nuclear genes including those encoding the small subunit of ribulose-bisphosphate carboxylase, chlorophyll A/B binding protein, protochlorophyllide reductase, rRNA, etc. It also controls the expression of its own gene(s) in a negative feedback fashion. The chain is Phytochrome A1 (PHYA1) from Nicotiana tabacum (Common tobacco).